The chain runs to 204 residues: Urease accessory protein UreG (204 aa).

Residue 11–18 participates in GTP binding; sequence GPVGAGKH.

It belongs to the SIMIBI class G3E GTPase family. UreG subfamily. As to quaternary structure, homodimer. UreD, UreF and UreG form a complex that acts as a GTP-hydrolysis-dependent molecular chaperone, activating the urease apoprotein by helping to assemble the nickel containing metallocenter of UreC. The UreE protein probably delivers the nickel.

The protein resides in the cytoplasm. In terms of biological role, facilitates the functional incorporation of the urease nickel metallocenter. This process requires GTP hydrolysis, probably effectuated by UreG. The chain is Urease accessory protein UreG from Staphylococcus xylosus.